The sequence spans 411 residues: MFSISRITRTSSFTTQFRALYRFKHSARKLQSIPFSIYKKMSAADRLNQTHDILSESVQAVENPFKVTVIGSGNWGTTISKVVAENAALRPHLFVKRVDMWVFEETVDGQKLTEIINTKHQNVKYLPNIDLPENLVANPDLVSAVKDADILVFNIPHQFLPRIVSQLQGNIKKDARAISCLKGFDVSKDGVKLLSTYVTEKLGITCGALSGANLAPEVAKENWSETTVAYELPKDFKGEGKDVDHAVLKALFHRPYFHVNVIDDVAGISVAGALKNVVALGCGFVEGLGWGNNASAAIQRVGLGEIIKFGQMFFPDSRVETYYQESAGVADLITTCSGGRNVRVATHMAKTGKSAEECEKELLNGQSAQVFTHVRRSTSGWPSAVRPMNSFCSRPFTRLSTRTLLWTLCQT.

Residues 71–76 (GSGNWG), F103, and F159 contribute to the NAD(+) site. Substrate is bound at residue K182. NAD(+) is bound at residue A215. K275 functions as the Proton acceptor in the catalytic mechanism. The NAD(+) site is built by R340 and Q369. 340-341 (RN) is a substrate binding site.

This sequence belongs to the NAD-dependent glycerol-3-phosphate dehydrogenase family.

It carries out the reaction sn-glycerol 3-phosphate + NAD(+) = dihydroxyacetone phosphate + NADH + H(+). The chain is Glycerol-3-phosphate dehydrogenase [NAD(+)] (GPD) from Lachancea thermotolerans (Yeast).